The primary structure comprises 306 residues: MSTLGHQYDNSLVSNAFGFLRLPMNFQPYDSDADWVITGVPFDMATSGRAGGRHGPAAIRQVSTNLAWEHNRFPWNFDMRERLNVVDCGDLVYAFGDAREMSEKLQAHAEKLLAAGKRMLSFGGDHFVTLPLLRAHAKHFGKMALVHFDAHTDTYANGCEFDHGTMFYTAPKEGLIDPNHSVQIGIRTEFDKDNGFTVLDACQVNDRSVDDVIAQVKQIVGDMPVYLTFDIDCLDPAFAPGTGTPVIGGLTSDRAIKLVRGLKDLNIVGMDVVEVAPAYDQSEITALAAATLALEMLYIQAAKKGE.

Residues His126, Asp149, His151, Asp153, Asp230, and Asp232 each contribute to the Mn(2+) site.

The protein belongs to the arginase family. Agmatinase subfamily. Mn(2+) serves as cofactor.

It carries out the reaction agmatine + H2O = urea + putrescine. It participates in amine and polyamine biosynthesis; putrescine biosynthesis via agmatine pathway; putrescine from agmatine: step 1/1. Functionally, catalyzes the formation of putrescine from agmatine. This is Agmatinase from Escherichia coli (strain K12 / DH10B).